The primary structure comprises 135 residues: UPF0102 protein RPC_0320 (135 aa).

The protein belongs to the UPF0102 family.

The protein is UPF0102 protein RPC_0320 of Rhodopseudomonas palustris (strain BisB18).